Here is a 631-residue protein sequence, read N- to C-terminus: 1-deoxy-D-xylulose-5-phosphate synthase (631 aa).

Thiamine diphosphate contacts are provided by residues histidine 73 and 114–116 (SHA). Aspartate 145 provides a ligand contact to Mg(2+). Thiamine diphosphate is bound by residues 146–147 (GA), asparagine 175, tyrosine 286, and glutamate 368. Asparagine 175 provides a ligand contact to Mg(2+).

This sequence belongs to the transketolase family. DXPS subfamily. As to quaternary structure, homodimer. Mg(2+) is required as a cofactor. Thiamine diphosphate serves as cofactor.

The catalysed reaction is D-glyceraldehyde 3-phosphate + pyruvate + H(+) = 1-deoxy-D-xylulose 5-phosphate + CO2. Its pathway is metabolic intermediate biosynthesis; 1-deoxy-D-xylulose 5-phosphate biosynthesis; 1-deoxy-D-xylulose 5-phosphate from D-glyceraldehyde 3-phosphate and pyruvate: step 1/1. Its function is as follows. Catalyzes the acyloin condensation reaction between C atoms 2 and 3 of pyruvate and glyceraldehyde 3-phosphate to yield 1-deoxy-D-xylulose-5-phosphate (DXP). The sequence is that of 1-deoxy-D-xylulose-5-phosphate synthase from Nocardia farcinica (strain IFM 10152).